An 81-amino-acid polypeptide reads, in one-letter code: Photosystem I iron-sulfur center (81 aa).

2 consecutive 4Fe-4S ferredoxin-type domains span residues Ala-2–Trp-31 and Ile-39–Tyr-68. [4Fe-4S] cluster contacts are provided by Cys-11, Cys-14, Cys-17, Cys-21, Cys-48, Cys-51, Cys-54, and Cys-58.

As to quaternary structure, the eukaryotic PSI reaction center is composed of at least 11 subunits. It depends on [4Fe-4S] cluster as a cofactor.

The protein localises to the plastid. It is found in the chloroplast thylakoid membrane. It carries out the reaction reduced [plastocyanin] + hnu + oxidized [2Fe-2S]-[ferredoxin] = oxidized [plastocyanin] + reduced [2Fe-2S]-[ferredoxin]. Its function is as follows. Apoprotein for the two 4Fe-4S centers FA and FB of photosystem I (PSI); essential for photochemical activity. FB is the terminal electron acceptor of PSI, donating electrons to ferredoxin. The C-terminus interacts with PsaA/B/D and helps assemble the protein into the PSI complex. Required for binding of PsaD and PsaE to PSI. PSI is a plastocyanin-ferredoxin oxidoreductase, converting photonic excitation into a charge separation, which transfers an electron from the donor P700 chlorophyll pair to the spectroscopically characterized acceptors A0, A1, FX, FA and FB in turn. This is Photosystem I iron-sulfur center (psaC) from Anthoceros angustus (Hornwort).